Reading from the N-terminus, the 183-residue chain is Maltose O-acetyltransferase (183 aa).

An acetyl-CoA-binding site is contributed by N83. H113 acts as the Proton donor/acceptor in catalysis. Acetyl-CoA-binding positions include G140, S158, 163-164 (TK), R178, and K181.

It belongs to the transferase hexapeptide repeat family. As to quaternary structure, homodimer.

It catalyses the reaction D-maltose + acetyl-CoA = 1-O-acetylmaltose + CoA. In terms of biological role, catalyzes the CoA-dependent transfer of an acetyl group to maltose and other sugars. Acetylates glucose exclusively at the C6 position and maltose at the C6 position of the non-reducing end glucosyl moiety. Is able to acetylate maltooligosaccharides. This chain is Maltose O-acetyltransferase (maa), found in Escherichia coli (strain K12).